We begin with the raw amino-acid sequence, 852 residues long: Cytochrome P450 monooxygenase mpaDE (852 aa).

Topologically, residues methionine 1–isoleucine 6 are lumenal. The chain crosses the membrane as a helical span at residues isoleucine 7–leucine 29. Residues glutamine 30–lysine 852 lie on the Cytoplasmic side of the membrane. Heme is bound at residue cysteine 448.

It belongs to the cytochrome P450 family. It depends on heme as a cofactor.

It localises to the endoplasmic reticulum membrane. The catalysed reaction is 5-methylorsellinate + reduced [NADPH--hemoprotein reductase] + O2 = 4,6-dihydroxy-2-(hydroxymethyl)-3-methylbenzoate + oxidized [NADPH--hemoprotein reductase] + H2O + H(+). It catalyses the reaction 4,6-dihydroxy-2-(hydroxymethyl)-3-methylbenzoate + H(+) = 5,7-dihydroxy-4-methylphthalide + H2O. It functions in the pathway secondary metabolite biosynthesis; terpenoid biosynthesis. In terms of biological role, cytochrome P450 monooxygenase; part of the gene cluster that mediates the biosynthesis of mycophenolic acid (MPA), the first isolated antibiotic natural product in the world obtained from a culture of Penicillium brevicompactum in 1893. MpaDE is an endoplasmic reticulum-bound enzyme that catalyzes the conversion of 5-methylorsellinic acid (5MOA) into the phthalide compound 5,7-dihydroxy-4,6-dimethylphthalide (DHMP). MpaDE first catalyzes hydroxylation of 5-MOA to 4,6-dihydroxy-2-(hydroxymethyl)-3-methylbenzoic acid (DHMB), and then acts as a lactone synthase that catalyzes the ring closure to convert DHMB into DHMP. The first step of the pathway is the synthesis of 5-methylorsellinic acid (5MOA) by the cytosolic polyketide synthase mpaC. 5MOA is then converted to the phthalide compound 5,7-dihydroxy-4,6-dimethylphthalide (DHMP) by the endoplasmic reticulum-bound cytochrome P450 monooxygenase mpaDE. MpaDE first catalyzes hydroxylation of 5-MOA to 4,6-dihydroxy-2-(hydroxymethyl)-3-methylbenzoic acid (DHMB). MpaDE then acts as a lactone synthase that catalyzes the ring closure to convert DHMB into DHMP. The next step is the prenylation of DHMP by the Golgi apparatus-associated prenyltransferase mpaA to yield farnesyl-DHMP (FDHMP). The ER-bound oxygenase mpaB then mediates the oxidative cleavage the C19-C20 double bond in FDHMP to yield FDHMP-3C via a mycophenolic aldehyde intermediate. The O-methyltransferase mpaG catalyzes the methylation of FDHMP-3C to yield MFDHMP-3C. After the cytosolic methylation of FDHMP-3C, MFDHMP-3C enters into peroxisomes probably via free diffusion due to its low molecular weight. Upon a peroxisomal CoA ligation reaction, catalyzed by a beta-oxidation component enzyme acyl-CoA ligase ACL891, MFDHMP-3C-CoA would then be restricted to peroxisomes for the following beta-oxidation pathway steps. The peroxisomal beta-oxidation machinery than converts MFDHMP-3C-CoA into MPA_CoA, via a beta-oxidation chain-shortening process. Finally mpaH acts as a peroxisomal acyl-CoA hydrolase with high substrate specificity toward MPA-CoA to release the final product MPA. The sequence is that of Cytochrome P450 monooxygenase mpaDE from Penicillium roqueforti (strain FM164).